The chain runs to 209 residues: Glycerol-3-phosphate acyltransferase (209 aa).

A run of 5 helical transmembrane segments spans residues 5–25, 50–70, 74–94, 115–135, and 151–171; these read IIGM…LWIG, LGFK…TLAA, YFLG…ASLG, ILLA…IFVL, and AIFI…AGIL.

This sequence belongs to the PlsY family. In terms of assembly, probably interacts with PlsX.

It localises to the cell membrane. The enzyme catalyses an acyl phosphate + sn-glycerol 3-phosphate = a 1-acyl-sn-glycero-3-phosphate + phosphate. It functions in the pathway lipid metabolism; phospholipid metabolism. In terms of biological role, catalyzes the transfer of an acyl group from acyl-phosphate (acyl-PO(4)) to glycerol-3-phosphate (G3P) to form lysophosphatidic acid (LPA). This enzyme utilizes acyl-phosphate as fatty acyl donor, but not acyl-CoA or acyl-ACP. This Limosilactobacillus reuteri (strain DSM 20016) (Lactobacillus reuteri) protein is Glycerol-3-phosphate acyltransferase.